Consider the following 376-residue polypeptide: Heat stress transcription factor A-2a (376 aa).

The tract at residues 137–168 is disordered; sequence LKTIKRRRPPPSSPPSSSSSSSSSQHQQQPAA. Residues 151–160 show a composition bias toward low complexity; the sequence is PSSSSSSSSS. Residues 182-229 adopt a coiled-coil conformation; it reads VNRLQRDKSVLIAEVVKLRQEQQTTRAQMQAMEERISAAEQKQQQMTV. The segment at 185 to 235 is hydrophobic repeat HR-A/B; the sequence is LQRDKSVLIAEVVKLRQEQQTTRAQMQAMEERISAAEQKQQQMTVFLARAM. Residues 265–269 carry the Nuclear localization signal motif; it reads KKRRR. 2 disordered regions span residues 296 to 319 and 332 to 362; these read VAEP…DTES and KQRE…DDDD. The span at 307-316 shows a compositional bias: gly residues; sequence GDGGGGGGGD. The short motif at 318 to 325 is the AHA element; the sequence is ESFWMQLL. Acidic residues predominate over residues 352–362; it reads VDNDEEDDDDD. The short motif at 366-373 is the Nuclear export signal element; sequence LVQSIYHL.

The protein belongs to the HSF family. Class A subfamily. In terms of assembly, homotrimer. In terms of processing, exhibits temperature-dependent phosphorylation.

It is found in the cytoplasm. It localises to the nucleus. In terms of biological role, transcriptional regulator that specifically binds DNA of heat shock promoter elements (HSE). The protein is Heat stress transcription factor A-2a (HSFA2A) of Oryza sativa subsp. japonica (Rice).